A 127-amino-acid polypeptide reads, in one-letter code: Large ribosomal subunit protein eL8 (127 aa).

It belongs to the eukaryotic ribosomal protein eL8 family. In terms of assembly, part of the 50S ribosomal subunit. Probably part of the RNase P complex.

It is found in the cytoplasm. Functionally, multifunctional RNA-binding protein that recognizes the K-turn motif in ribosomal RNA, the RNA component of RNase P, box H/ACA, box C/D and box C'/D' sRNAs. The polypeptide is Large ribosomal subunit protein eL8 (Desulfurococcus amylolyticus (strain DSM 18924 / JCM 16383 / VKM B-2413 / 1221n) (Desulfurococcus kamchatkensis)).